Here is a 370-residue protein sequence, read N- to C-terminus: L-lysine 4-hydroxylase (370 aa).

Fe cation-binding residues include histidine 176, glutamate 178, and histidine 310.

It belongs to the clavaminate synthase family. Fe(2+) serves as cofactor.

It carries out the reaction L-lysine + 2-oxoglutarate + O2 = (4R)-4-hydroxy-L-lysine + succinate + CO2. Functionally, alpha-ketoglutarate-dependent dioxygenase that in vitro catalyzes the regio- and stereoselective hydroxylation of L-lysine, leading to (4R)-4-hydroxy-L-lysine. To a lesser extent, can also use (3S)-3-hydroxy-L-lysine as substrate, producing the dihydroxylated product (3R,4R)-3,4-hydroxy-L-lysine. Cannot use D-lysine or L-ornithine as substrate. This Flavobacterium johnsoniae (strain ATCC 17061 / DSM 2064 / JCM 8514 / BCRC 14874 / CCUG 350202 / NBRC 14942 / NCIMB 11054 / UW101) (Cytophaga johnsonae) protein is L-lysine 4-hydroxylase.